A 1172-amino-acid polypeptide reads, in one-letter code: Short transient receptor potential channel 2 (1172 aa).

Basic and acidic residues predominate over residues Met-1 to Ser-10. Disordered stretches follow at residues Met-1–Asp-22, Val-69–Asn-98, Ser-140–Gln-227, and Ala-249–Val-271. At Met-1–Lys-659 the chain is on the cytoplasmic side. A compositionally biased stretch (polar residues) spans Pro-75 to Val-87. The segment covering Glu-166–Arg-177 has biased composition (basic and acidic residues). Residues Ser-195–Asn-204 show a composition bias toward polar residues. Residues Arg-206–Gln-218 are compositionally biased toward basic residues. Positions Ser-261–Ser-270 are enriched in low complexity. 3 ANK repeats span residues Lys-301–Gly-330, Gln-377–Gly-406, and Pro-430–Arg-459. The chain crosses the membrane as a helical span at residues Ile-660–Leu-680. The Extracellular segment spans residues Gly-681–Glu-702. A helical transmembrane segment spans residues Thr-703–Ile-723. Topologically, residues Glu-724–Asp-738 are cytoplasmic. A helical transmembrane segment spans residues Val-739–Ala-759. Residues Tyr-760–Gln-789 lie on the Extracellular side of the membrane. A helical transmembrane segment spans residues Phe-790–Ile-810. At Leu-811–Arg-833 the chain is on the cytoplasmic side. A helical transmembrane segment spans residues Phe-834–Val-854. Topologically, residues Pro-855–Ala-899 are extracellular. Residues Met-900–Ile-920 traverse the membrane as a helical segment. Residues Thr-921–Ser-1172 lie on the Cytoplasmic side of the membrane. A disordered region spans residues Val-1118–Ser-1172. Residues Ala-1130–Ala-1144 are compositionally biased toward low complexity.

Belongs to the transient receptor (TC 1.A.4) family. STrpC subfamily. TRPC2 sub-subfamily. In terms of tissue distribution, isoform 3 is ubiquitously expressed at low levels. Isoform 4 is expressed exclusively in vomeronasal organ.

It is found in the membrane. Functionally, thought to form a receptor-activated non-selective calcium permeant cation channel. Probably is operated by a phosphatidylinositol second messenger system activated by receptor tyrosine kinases or G-protein coupled receptors. May also be activated by intracellular calcium store depletion. Plays a role in mediating responsivity to pheromones that elicit aggressive and mating behaviors. Required for response to the Esp1 pheromone which enhances female sexual receptive behavior and to the Esp22 pheromone which inhibits adult male mating behavior. This is Short transient receptor potential channel 2 (Trpc2) from Mus musculus (Mouse).